Here is a 132-residue protein sequence, read N- to C-terminus: L-ectoine synthase (132 aa).

It belongs to the ectoine synthase family.

It carries out the reaction (2S)-4-acetamido-2-aminobutanoate = L-ectoine + H2O. The protein operates within amine and polyamine biosynthesis; ectoine biosynthesis; L-ectoine from L-aspartate 4-semialdehyde: step 3/3. Functionally, catalyzes the circularization of gamma-N-acetyl-alpha,gamma-diaminobutyric acid (ADABA) to ectoine (1,4,5,6-tetrahydro-2-methyl-4-pyrimidine carboxylic acid), which is an excellent osmoprotectant. This chain is L-ectoine synthase, found in Saccharophagus degradans (strain 2-40 / ATCC 43961 / DSM 17024).